The following is a 137-amino-acid chain: Large ribosomal subunit protein uL16 (137 aa).

Residues 1 to 17 (MLQPKRTKFRKQMKGRN) are compositionally biased toward basic residues. The disordered stretch occupies residues 1-22 (MLQPKRTKFRKQMKGRNRGLAQ).

The protein belongs to the universal ribosomal protein uL16 family. As to quaternary structure, part of the 50S ribosomal subunit.

In terms of biological role, binds 23S rRNA and is also seen to make contacts with the A and possibly P site tRNAs. In Teredinibacter turnerae (strain ATCC 39867 / T7901), this protein is Large ribosomal subunit protein uL16.